Here is a 447-residue protein sequence, read N- to C-terminus: BAG family molecular chaperone regulator 5 (447 aa).

BAG domains follow at residues 9–86, 95–167, 182–260, 275–350, and 365–442; these read SISR…EQNA, QNIF…ENCM, SVAK…DLEE, SILK…DLKE, and SHKA…DLKS.

Binds to the ATPase domain of HSP/HSP70 chaperones. Binds PRKN. Interacts complex with HSPA8 and JPH2.

In terms of biological role, co-chaperone for HSP/HSP70 proteins. It functions as a nucleotide-exchange factor promoting the release of ADP from HSP70, thereby activating Hsp70-mediated protein refolding. Has an essential role in maintaining proteostasis at junctional membrane complexes (JMC), where it may function as a scaffold between the HSPA8 chaperone and JMC proteins enabling correct, HSPA8-dependent JMC protein folding. Inhibits both auto-ubiquitination of PRKN and ubiquitination of target proteins by PRKN. The sequence is that of BAG family molecular chaperone regulator 5 (BAG5) from Bos taurus (Bovine).